The following is a 201-amino-acid chain: Pyridoxal 5'-phosphate synthase subunit PdxT (201 aa).

Residue 49–51 (GES) participates in L-glutamine binding. Cys81 serves as the catalytic Nucleophile. L-glutamine-binding positions include Arg110 and 139-140 (IR). Residues His175 and Glu177 each act as charge relay system in the active site.

This sequence belongs to the glutaminase PdxT/SNO family. As to quaternary structure, in the presence of PdxS, forms a dodecamer of heterodimers. Only shows activity in the heterodimer.

It carries out the reaction aldehydo-D-ribose 5-phosphate + D-glyceraldehyde 3-phosphate + L-glutamine = pyridoxal 5'-phosphate + L-glutamate + phosphate + 3 H2O + H(+). It catalyses the reaction L-glutamine + H2O = L-glutamate + NH4(+). It participates in cofactor biosynthesis; pyridoxal 5'-phosphate biosynthesis. Its function is as follows. Catalyzes the hydrolysis of glutamine to glutamate and ammonia as part of the biosynthesis of pyridoxal 5'-phosphate. The resulting ammonia molecule is channeled to the active site of PdxS. The polypeptide is Pyridoxal 5'-phosphate synthase subunit PdxT (Streptomyces avermitilis (strain ATCC 31267 / DSM 46492 / JCM 5070 / NBRC 14893 / NCIMB 12804 / NRRL 8165 / MA-4680)).